Consider the following 492-residue polypeptide: Catalase isozyme 2 (492 aa).

Catalysis depends on residues H65 and N138. Y348 contributes to the heme binding site.

The protein belongs to the catalase family. In terms of assembly, homotetramer. Heme is required as a cofactor.

The protein resides in the peroxisome. It localises to the glyoxysome. The catalysed reaction is 2 H2O2 = O2 + 2 H2O. Functionally, occurs in almost all aerobically respiring organisms and serves to protect cells from the toxic effects of hydrogen peroxide. The sequence is that of Catalase isozyme 2 (CAT2) from Solanum tuberosum (Potato).